The chain runs to 238 residues: Tyrosine recombinase XerD-like (238 aa).

The region spanning 1–75 is the Core-binding (CB) domain; the sequence is MKLPNEIDEY…SANQYLLFLY (75 aa). The Tyr recombinase domain maps to 90 to 238; that stretch reads VQKKSQTAQS…TITTLEKYYR (149 aa). Catalysis depends on residues lysine 154 and arginine 204. Tyrosine 236 functions as the O-(3'-phospho-DNA)-tyrosine intermediate in the catalytic mechanism.

It belongs to the 'phage' integrase family. XerD-like subfamily.

The protein resides in the cytoplasm. Functionally, putative tyrosine recombinase. Not involved in the cutting and rejoining of the recombining DNA molecules on dif(SL) site. The polypeptide is Tyrosine recombinase XerD-like (ynbA) (Lactococcus lactis subsp. lactis (strain IL1403) (Streptococcus lactis)).